The primary structure comprises 176 residues: NAD(P)H-quinone oxidoreductase subunit 6, chloroplastic (176 aa).

5 consecutive transmembrane segments (helical) span residues 10–30 (FLLV…VLLT), 32–52 (PIYS…LYIL), 61–81 (AQLL…VMFM), 92–112 (LWTV…GLLI), and 152–172 (FFLP…GAIT).

The protein belongs to the complex I subunit 6 family. As to quaternary structure, NDH is composed of at least 16 different subunits, 5 of which are encoded in the nucleus.

The protein localises to the plastid. The protein resides in the chloroplast thylakoid membrane. It carries out the reaction a plastoquinone + NADH + (n+1) H(+)(in) = a plastoquinol + NAD(+) + n H(+)(out). It catalyses the reaction a plastoquinone + NADPH + (n+1) H(+)(in) = a plastoquinol + NADP(+) + n H(+)(out). Functionally, NDH shuttles electrons from NAD(P)H:plastoquinone, via FMN and iron-sulfur (Fe-S) centers, to quinones in the photosynthetic chain and possibly in a chloroplast respiratory chain. The immediate electron acceptor for the enzyme in this species is believed to be plastoquinone. Couples the redox reaction to proton translocation, and thus conserves the redox energy in a proton gradient. The polypeptide is NAD(P)H-quinone oxidoreductase subunit 6, chloroplastic (ndhG) (Morus indica (Mulberry)).